Reading from the N-terminus, the 440-residue chain is Endoglucanase B (440 aa).

An N-terminal signal peptide occupies residues 1-33; the sequence is MNKRLSRGKISLLASVFVTTTFMGGVNVLASTA. The Proton donor role is filled by E179. The Nucleophile role is filled by E305. Positions 381-440 constitute a Dockerin domain; that stretch reads TSYSLGDVNKDGKVNAIDYAVLKSILLGTNTNVDLSVSDMNKDGKVNALDLAVLKKMLLS.

It belongs to the glycosyl hydrolase 5 (cellulase A) family.

It catalyses the reaction Endohydrolysis of (1-&gt;4)-beta-D-glucosidic linkages in cellulose, lichenin and cereal beta-D-glucans.. It carries out the reaction Endohydrolysis of (1-&gt;4)-beta-D-xylosidic linkages in xylans.. In terms of biological role, has endoglucanase activity on carboxymethyl-cellulose (CMC), xylan and lichenan, but not Avicel. The sequence is that of Endoglucanase B (engB) from Clostridium cellulovorans (strain ATCC 35296 / DSM 3052 / OCM 3 / 743B).